The primary structure comprises 447 residues: MTTAQFICLSLGSNLGNRFEIFRKAFALLKELEIEDLQSSIILETKALLLPGSPKEWDLPFFNSVLIGKTTLSPKQLLSGVKQIERRLGRDVNALPWSPRVLDIDILLYGDENHQQEDVKIPHERITERPFLLSLIASLCPTRIFHKPGSEYHLKSFGEIAHLLPCPQEMILNSFSPNTLLMGVVNVTDNSISDEGLYLEASKAVAHAEKLFAQGASVIDFGGQATNPKVQQLLNVEQEWSRLEPVLKLLAEKWAGRRQYPDISLDTFYPEIIKRALEIYPIRWINDVSGGSKEMAEIARDANLLLVINHSCSLPPRPDKTLAFTTCASDQLLSWGEKQIEAFVALGLRQDQIIFDPGIGFGTTQIQALNVLHKMKKFRKLGCATLVGHSRKSCFSLLGKYDAKDRDWETVSLSVLLQQQGVNYLRVHDVEANQRVLSAAAWSGVHV.

Residues 1–165 form an HPPK region; it reads MTTAQFICLS…SFGEIAHLLP (165 aa). A Pterin-binding domain is found at 179 to 438; that stretch reads TLLMGVVNVT…DVEANQRVLS (260 aa). The interval 181 to 447 is DHPS; that stretch reads LMGVVNVTDN…SAAAWSGVHV (267 aa). Asn186 serves as a coordination point for Mg(2+). Residues Thr226, Asp266, Asn286, Asp356, Lys392, and 426 to 428 contribute to the (7,8-dihydropterin-6-yl)methyl diphosphate site; that span reads RVH.

It in the C-terminal section; belongs to the DHPS family. In the N-terminal section; belongs to the HPPK family. Mg(2+) is required as a cofactor.

It catalyses the reaction 6-hydroxymethyl-7,8-dihydropterin + ATP = (7,8-dihydropterin-6-yl)methyl diphosphate + AMP + H(+). The enzyme catalyses (7,8-dihydropterin-6-yl)methyl diphosphate + 4-aminobenzoate = 7,8-dihydropteroate + diphosphate. Its pathway is cofactor biosynthesis; tetrahydrofolate biosynthesis; 2-amino-4-hydroxy-6-hydroxymethyl-7,8-dihydropteridine diphosphate from 7,8-dihydroneopterin triphosphate: step 4/4. The protein operates within cofactor biosynthesis; tetrahydrofolate biosynthesis; 7,8-dihydrofolate from 2-amino-4-hydroxy-6-hydroxymethyl-7,8-dihydropteridine diphosphate and 4-aminobenzoate: step 1/2. In Chlamydia caviae (strain ATCC VR-813 / DSM 19441 / 03DC25 / GPIC) (Chlamydophila caviae), this protein is Folate synthesis bifunctional protein (folKP).